The following is a 249-amino-acid chain: MADRYSFSLTTFSPSGKLVQIEYALNAVNQGVTALGIKATNGIVLATEKKSSSPLADPSSLSKISLITPNIGMVYSGMGPDYRVLVDRARKVSHTGYKRIYNEYPPTRILVQDVARVMQEATQSGGVRPYGVSLLIAGWDEGGPMLYQVDPSGSYFPWKATAIGKNATTAKTFLEKRYTEGLELEDAVHIALLTLKETIEGEMNGDTIEIGIVGPPADHLLGVEGVEGAKGPRFRKLSPQEIEDYLTNL.

Belongs to the peptidase T1A family. In terms of assembly, the 26S proteasome consists of a 20S proteasome core and two 19S regulatory subunits. The 20S proteasome core is composed of 28 subunits that are arranged in four stacked rings, resulting in a barrel-shaped structure. The two end rings are each formed by seven alpha subunits, and the two central rings are each formed by seven beta subunits. The catalytic chamber with the active sites is on the inside of the barrel.

Its subcellular location is the cytoplasm. It localises to the nucleus. Its function is as follows. The proteasome is a multicatalytic proteinase complex which is characterized by its ability to cleave peptides with Arg, Phe, Tyr, Leu, and Glu adjacent to the leaving group at neutral or slightly basic pH. The proteasome has an ATP-dependent proteolytic activity. This chain is Probable proteasome subunit alpha type-2 (pca-2), found in Neurospora crassa (strain ATCC 24698 / 74-OR23-1A / CBS 708.71 / DSM 1257 / FGSC 987).